The following is a 419-amino-acid chain: O-methyltransferase desB (419 aa).

Residues 255–256 (GG), D280, 306–307 (DF), and R323 each bind S-adenosyl-L-methionine. Catalysis depends on H326, which acts as the Proton acceptor.

The protein belongs to the class I-like SAM-binding methyltransferase superfamily. Cation-independent O-methyltransferase family. S-adenosyl-L-methionine serves as cofactor.

Its pathway is secondary metabolite biosynthesis. Functionally, non-reducing polyketide synthase; part of the gene cluster that mediates the biosynthesis of the bicoumarin desertorin. The non-reducing polyketide synthase desS first catalyzes the formation of the pentaketidic 4,7-dihydroxy-5-methylcoumarin from acetyl coenzyme A and 4 malonyl coenzyme A molecules. Further O-methylation by desB leads to the formation of 7-demethylsiderin. Then, an oxidative phenol coupling catalyzed by the cytochrome P450 monooxygenase desC forms the 6,8'-dimer M-desertorin A via dimerization the monomeric precursor, 7-demethylsiderin. M-desertorin A is further converted to M-desertorin C. The chain is O-methyltransferase desB from Aspergillus desertorum (Emericella desertorum).